A 431-amino-acid chain; its full sequence is Glutamyl-tRNA(Gln) amidotransferase subunit A (431 aa).

Residues Lys-55 and Ser-130 each act as charge relay system in the active site. The active-site Acyl-ester intermediate is Ser-154.

This sequence belongs to the amidase family. GatA subfamily. As to quaternary structure, heterotrimer of A, B and C subunits.

The enzyme catalyses L-glutamyl-tRNA(Gln) + L-glutamine + ATP + H2O = L-glutaminyl-tRNA(Gln) + L-glutamate + ADP + phosphate + H(+). Allows the formation of correctly charged Gln-tRNA(Gln) through the transamidation of misacylated Glu-tRNA(Gln) in organisms which lack glutaminyl-tRNA synthetase. The reaction takes place in the presence of glutamine and ATP through an activated gamma-phospho-Glu-tRNA(Gln). The chain is Glutamyl-tRNA(Gln) amidotransferase subunit A from Methanococcus maripaludis (strain C7 / ATCC BAA-1331).